We begin with the raw amino-acid sequence, 266 residues long: MSFIDSMKLDLVGHLFGIRNRGLAAACCALAVASTIAFPYIRRDYQTFLSGGPSYAPQNIRGYFIVCVLALFRQEQKGLAIYDRLPEKRRWLPDLPPRNGPRPITTSHIIQRQRNQAPDPKFALEELKATVIPRVQARHTDLTHLSLSKFEFHAEAIFLLPSVPIDDPKNVPSHDTVRRTKREIAHMHDYHDFTLHLALAAQDGKEVVSKGWGQRHPLAGPGVPGPPTEWTFIYAPRNEEELAVVEMIIEASIGYMTNDPAGVVIA.

The helical transmembrane segment at 22 to 41 threads the bilayer; that stretch reads GLAAACCALAVASTIAFPYI.

This sequence belongs to the fungal luciferase family.

Its subcellular location is the membrane. It carries out the reaction 3-hydroxyhispidin + O2 = (E)-caffeoylpyruvate + hnu + CO2. It catalyses the reaction 3-hydroxyhispidin + O2 = 4-[(E)-2-(3,4-dihydroxyphenyl)ethenyl]-1,7-dihydroxy-2,3,5-trioxabicyclo[2.2.2]oct-7-en-6-one. Functionally, luciferase; part of the gene cluster that mediates the fungal bioluminescence cycle. Uses the fungal luciferin 3-hydroxyhispidin as a substrate to produce an endoperoxide as a high-energy intermediate with decomposition that yields oxyluciferin (also known as caffeoylpyruvate) and light emission. The fungal bioluminescence cycle begins with the hispidin synthetase that catalyzes the formation of hispidin which is further hydroxylated by the hispidin-3-hydroxylase, yielding the fungal luciferin 3-hydroxyhispidin. The luciferase then produces an endoperoxide as a high-energy intermediate with decomposition that yields oxyluciferin and light emission. Oxyluciferin can be recycled to caffeic acid by caffeoylpyruvate hydrolase. The chain is Luciferase from Armillaria gallica (Bulbous honey fungus).